Consider the following 87-residue polypeptide: Large ribosomal subunit protein bL27 (87 aa).

The interval 1–21 (MAHKKGQGSTQNNRDSAGRRL) is disordered.

The protein belongs to the bacterial ribosomal protein bL27 family.

This chain is Large ribosomal subunit protein bL27, found in Nautilia profundicola (strain ATCC BAA-1463 / DSM 18972 / AmH).